The chain runs to 299 residues: MKSLEYYRSQPKADVHTHLNLSMKYERYKQWSGVVIPNFPRKMRGLDEMHEIIGEYTRPQCKTAQDVLNLFTMSIEDAIADNVVVMETSVDIGFITHYEENLDHFLCDLSDLHRRYKRNVTLHFELGISKIRERSFVEQWAEPMMRSGIFENIDLYGPEISEGIEDFIYIFKLAEKYHLKKKAHVGEFSDAQSVRHFVEIFNLDEVQHGIGAATDENVLRFLAERKVRCNVCPTSNVMLNAVECLEKHPIKKMMDAGVRVGLGTDDLLFFGKTNSEQLFDMVSCGLITELHAEALLAVR.

Zn(2+) contacts are provided by His16 and His18. Residues His18 and Gly157 each contribute to the substrate site. His184 contacts Zn(2+). The active-site Proton donor is Glu187. Asp265 is a Zn(2+) binding site. Residue Asp266 coordinates substrate.

It belongs to the metallo-dependent hydrolases superfamily. Adenosine and AMP deaminases family. The cofactor is Zn(2+).

Putative nucleoside deaminase. May catalyze the hydrolytic deamination of adenosine or some similar substrate and play a role in purine metabolism. The protein is Putative adenosine/adenine deaminase of Treponema pallidum (strain Nichols).